Here is a 64-residue protein sequence, read N- to C-terminus: Large ribosomal subunit protein bL35 (64 aa).

The segment covering 22-31 (GKVKHGHAYR) has biased composition (basic residues). The disordered stretch occupies residues 22-64 (GKVKHGHAYRSHLAQSKTTKQKRQSRKSTLMNNSDFKRLKKLI).

The protein belongs to the bacterial ribosomal protein bL35 family.

This is Large ribosomal subunit protein bL35 from Mesomycoplasma hyopneumoniae (strain 232) (Mycoplasma hyopneumoniae).